Here is a 236-residue protein sequence, read N- to C-terminus: Uridylate kinase (236 aa).

10–13 (KLSG) serves as a coordination point for ATP. G52 serves as a coordination point for UMP. 2 residues coordinate ATP: G53 and R57. UMP contacts are provided by residues D72 and 133-140 (TGNPFFTT). ATP is bound by residues T160, Y166, and D169.

The protein belongs to the UMP kinase family. As to quaternary structure, homohexamer.

It is found in the cytoplasm. It catalyses the reaction UMP + ATP = UDP + ADP. It participates in pyrimidine metabolism; CTP biosynthesis via de novo pathway; UDP from UMP (UMPK route): step 1/1. With respect to regulation, inhibited by UTP. Catalyzes the reversible phosphorylation of UMP to UDP. This Cupriavidus pinatubonensis (strain JMP 134 / LMG 1197) (Cupriavidus necator (strain JMP 134)) protein is Uridylate kinase.